A 792-amino-acid chain; its full sequence is Endonuclease MutS2 (792 aa).

335 to 342 (GPNTGGKT) is a binding site for ATP. Residues 717–792 (VDLRGLNLEE…GAGVTIVKLK (76 aa)) form the Smr domain.

It belongs to the DNA mismatch repair MutS family. MutS2 subfamily. As to quaternary structure, homodimer. Binds to stalled ribosomes, contacting rRNA.

Functionally, endonuclease that is involved in the suppression of homologous recombination and thus may have a key role in the control of bacterial genetic diversity. Its function is as follows. Acts as a ribosome collision sensor, splitting the ribosome into its 2 subunits. Detects stalled/collided 70S ribosomes which it binds and splits by an ATP-hydrolysis driven conformational change. Acts upstream of the ribosome quality control system (RQC), a ribosome-associated complex that mediates the extraction of incompletely synthesized nascent chains from stalled ribosomes and their subsequent degradation. Probably generates substrates for RQC. This is Endonuclease MutS2 from Clostridioides difficile (strain 630) (Peptoclostridium difficile).